The chain runs to 643 residues: Phosphomethylpyrimidine synthase (643 aa).

Substrate-binding positions include Asn248, Met277, Tyr306, His342, 362 to 364 (SRG), 403 to 406 (DGLR), and Glu442. His446 lines the Zn(2+) pocket. Tyr469 is a binding site for substrate. His510 provides a ligand contact to Zn(2+). Cys590, Cys593, and Cys598 together coordinate [4Fe-4S] cluster.

It belongs to the ThiC family. Homodimer. [4Fe-4S] cluster is required as a cofactor.

The enzyme catalyses 5-amino-1-(5-phospho-beta-D-ribosyl)imidazole + S-adenosyl-L-methionine = 4-amino-2-methyl-5-(phosphooxymethyl)pyrimidine + CO + 5'-deoxyadenosine + formate + L-methionine + 3 H(+). It functions in the pathway cofactor biosynthesis; thiamine diphosphate biosynthesis. Its function is as follows. Catalyzes the synthesis of the hydroxymethylpyrimidine phosphate (HMP-P) moiety of thiamine from aminoimidazole ribotide (AIR) in a radical S-adenosyl-L-methionine (SAM)-dependent reaction. The chain is Phosphomethylpyrimidine synthase from Burkholderia pseudomallei (strain 1106a).